Consider the following 192-residue polypeptide: Succinate dehydrogenase cytochrome b560 subunit, mitochondrial (192 aa).

The transit peptide at 1-27 (MFGRTLNTFTSRNAPLVRNFDKFIVNN) directs the protein to the mitochondrion. Over 48–83 (YSTQAKKPFTITEKRIDELKTPYQPTSPHLTIYKFP) the chain is Mitochondrial matrix. A helical transmembrane segment spans residues 84-113 (LPAVMSIMHRATGICLALGITGLAGVTLFA). Residues 114–131 (PHDAIHYIQLLHTQYPAL) lie on the Mitochondrial intermembrane side of the membrane. The chain crosses the membrane as a helical span at residues 132 to 156 (VYPAKFAVALPLTYHFCTGVRHIIW). H146 provides a ligand contact to heme b. The Mitochondrial matrix portion of the chain corresponds to 157–164 (DETVKGLS). The chain crosses the membrane as a helical span at residues 165–186 (ISQIESSGKVLLAVVAVLSTIF). Residues 187-189 (TFV) lie on the Mitochondrial intermembrane side of the membrane.

This sequence belongs to the cytochrome b560 family. As to quaternary structure, component of complex II composed of four subunits: the flavoprotein (FP) sdha, iron-sulfur protein (IP) sdhb, and a cytochrome b560 composed of sdhc and sdhd. The cofactor is heme b.

The protein resides in the mitochondrion inner membrane. The protein operates within carbohydrate metabolism; tricarboxylic acid cycle. Functionally, membrane-anchoring subunit of succinate dehydrogenase (SDH) that is involved in complex II of the mitochondrial electron transport chain and is responsible for transferring electrons from succinate to ubiquinone (coenzyme Q). The polypeptide is Succinate dehydrogenase cytochrome b560 subunit, mitochondrial (sdhC) (Dictyostelium discoideum (Social amoeba)).